The following is an 81-amino-acid chain: Probable small nuclear ribonucleoprotein G (81 aa).

A Sm domain is found at 5–76 (GQPPALKKYM…VVTVEALEPV (72 aa)).

It belongs to the snRNP Sm proteins family.

It is found in the nucleus. Functionally, probable common Sm protein, is found in U1 and U2 snRNPs and may be part of the spliceosome. The chain is Probable small nuclear ribonucleoprotein G (C29) from Medicago sativa (Alfalfa).